A 188-amino-acid polypeptide reads, in one-letter code: Probable nicotinate-nucleotide adenylyltransferase (188 aa).

Belongs to the NadD family.

The catalysed reaction is nicotinate beta-D-ribonucleotide + ATP + H(+) = deamido-NAD(+) + diphosphate. It participates in cofactor biosynthesis; NAD(+) biosynthesis; deamido-NAD(+) from nicotinate D-ribonucleotide: step 1/1. Its function is as follows. Catalyzes the reversible adenylation of nicotinate mononucleotide (NaMN) to nicotinic acid adenine dinucleotide (NaAD). The sequence is that of Probable nicotinate-nucleotide adenylyltransferase from Listeria monocytogenes serotype 4a (strain HCC23).